The primary structure comprises 172 residues: Shikimate kinase (172 aa).

Position 14 to 19 (14 to 19) interacts with ATP; sequence GAGKST. Serine 18 lines the Mg(2+) pocket. Residues aspartate 36, arginine 60, and glycine 82 each coordinate substrate. An ATP-binding site is contributed by arginine 120. Arginine 139 is a substrate binding site. ATP is bound at residue glutamine 156.

The protein belongs to the shikimate kinase family. As to quaternary structure, monomer. The cofactor is Mg(2+).

Its subcellular location is the cytoplasm. The enzyme catalyses shikimate + ATP = 3-phosphoshikimate + ADP + H(+). It functions in the pathway metabolic intermediate biosynthesis; chorismate biosynthesis; chorismate from D-erythrose 4-phosphate and phosphoenolpyruvate: step 5/7. In terms of biological role, catalyzes the specific phosphorylation of the 3-hydroxyl group of shikimic acid using ATP as a cosubstrate. The protein is Shikimate kinase of Aliivibrio salmonicida (strain LFI1238) (Vibrio salmonicida (strain LFI1238)).